The sequence spans 171 residues: Nicotinamide-nucleotide adenylyltransferase (171 aa).

This sequence belongs to the archaeal NMN adenylyltransferase family.

The protein localises to the cytoplasm. It catalyses the reaction beta-nicotinamide D-ribonucleotide + ATP + H(+) = diphosphate + NAD(+). It functions in the pathway cofactor biosynthesis; NAD(+) biosynthesis; NAD(+) from nicotinamide D-ribonucleotide: step 1/1. This chain is Nicotinamide-nucleotide adenylyltransferase, found in Methanococcus maripaludis (strain DSM 14266 / JCM 13030 / NBRC 101832 / S2 / LL).